A 186-amino-acid polypeptide reads, in one-letter code: Elongation factor P (186 aa).

It belongs to the elongation factor P family.

The protein localises to the cytoplasm. The protein operates within protein biosynthesis; polypeptide chain elongation. In terms of biological role, involved in peptide bond synthesis. Stimulates efficient translation and peptide-bond synthesis on native or reconstituted 70S ribosomes in vitro. Probably functions indirectly by altering the affinity of the ribosome for aminoacyl-tRNA, thus increasing their reactivity as acceptors for peptidyl transferase. This chain is Elongation factor P, found in Ruminiclostridium cellulolyticum (strain ATCC 35319 / DSM 5812 / JCM 6584 / H10) (Clostridium cellulolyticum).